Reading from the N-terminus, the 316-residue chain is Annexin D7 (316 aa).

At Ala-2 the chain carries N-acetylalanine. Annexin repeat units lie at residues 11-82, 83-154, 166-237, and 241-312; these read PLPE…LWTF, EPAE…PLVS, TLAR…AVIK, and YPEK…ALLG. Ca(2+) is bound by residues Phe-24, Gly-26, Gly-28, and Glu-68. Phosphoserine is present on Ser-95. Thr-100 and Thr-112 each carry phosphothreonine. Tyr-129 is subject to Phosphotyrosine. Ca(2+)-binding residues include Ile-254 and Gly-258. Tyr-283 carries the post-translational modification Phosphotyrosine. Residue Ser-288 is modified to Phosphoserine. 3 residues coordinate Ca(2+): Asp-298, Thr-299, and Glu-304.

This sequence belongs to the annexin (TC 1.A.31.1) family. Expressed in flowers.

The sequence is that of Annexin D7 (ANNAT7) from Arabidopsis thaliana (Mouse-ear cress).